The primary structure comprises 292 residues: G1/S-specific cyclin-D3 (292 aa).

The Cyclin N-terminal domain maps to 27 to 152 (VLQSLLRLEE…LVLGKLKWDL (126 aa)). The segment at 254-292 (SLREASQTSSSPAPKAPRGSSSQGPSQTSTPTDVTAIHL) is disordered. Phosphoserine is present on residues serine 264 and serine 279. Residues 272-285 (GSSSQGPSQTSTPT) show a composition bias toward low complexity. Phosphothreonine is present on threonine 283.

Belongs to the cyclin family. Cyclin D subfamily. Interacts with the CDK4 and CDK6 protein kinases to form a serine/threonine kinase holoenzyme complex. The cyclin subunit imparts substrate specificity to the complex. Interacts with ATF5. Interacts with EIF3K. Component of the ternary complex cyclin D/CDK4/CDKN1B required for nuclear translocation and modulation of CDK4-mediated kinase activity. Can form similar complexes with either CDKN1A or CDKN2A. Phosphorylation at Thr-283 by MAP kinases is required for ubiquitination and degradation by the DCX(AMBRA1) complex. In terms of processing, ubiquitinated by the DCX(AMBRA1) complex during the transition from G1 to S cell phase, leading to its degradation: ubiquitination is dependent on Thr-283 phosphorylation. The DCX(AMBRA1) complex represents the major regulator of CCND3 stability during the G1/S transition. Polyubiquitinated by the SCF(FBXL2) complex, leading to proteasomal degradation.

The protein resides in the nucleus. It localises to the cytoplasm. Regulatory component of the cyclin D3-CDK4 (DC) complex that phosphorylates and inhibits members of the retinoblastoma (RB) protein family including RB1 and regulates the cell-cycle during G(1)/S transition. Phosphorylation of RB1 allows dissociation of the transcription factor E2F from the RB/E2F complex and the subsequent transcription of E2F target genes which are responsible for the progression through the G(1) phase. Hypophosphorylates RB1 in early G(1) phase. Cyclin D-CDK4 complexes are major integrators of various mitogenenic and antimitogenic signals. Component of the ternary complex, cyclin D3/CDK4/CDKN1B, required for nuclear translocation and activity of the cyclin D-CDK4 complex. Shows transcriptional coactivator activity with ATF5 independently of CDK4. In Homo sapiens (Human), this protein is G1/S-specific cyclin-D3.